A 226-amino-acid chain; its full sequence is Protein B (226 aa).

An igG constant region-binding region spans residues 37–100 (DNVQGTDYEK…FSTQHLANKV (64 aa)). Repeats lie at residues 158–168 (TKSKLDKEIWN), 169–179 (TRFTRDKKVLN), and 180–190 (VKEFKVYNTLN).

It localises to the secreted. Protein B belongs to the group of bacterial Fc-binding protein. The chain is Protein B from Streptococcus agalactiae.